The chain runs to 325 residues: Leucine carboxyl methyltransferase 1 (325 aa).

S-adenosyl-L-methionine contacts are provided by residues Arg79, Gly104, Asp127, 174-175, and Glu200; that span reads DL.

Belongs to the methyltransferase superfamily. LCMT family.

It catalyses the reaction [phosphatase 2A protein]-C-terminal L-leucine + S-adenosyl-L-methionine = [phosphatase 2A protein]-C-terminal L-leucine methyl ester + S-adenosyl-L-homocysteine. Methylates the carboxyl group of the C-terminal leucine residue of protein phosphatase 2A catalytic subunits to form alpha-leucine ester residues. The protein is Leucine carboxyl methyltransferase 1 (PPM1) of Eremothecium gossypii (strain ATCC 10895 / CBS 109.51 / FGSC 9923 / NRRL Y-1056) (Yeast).